Reading from the N-terminus, the 148-residue chain is 18 kDa antigen (148 aa).

The region spanning 21–131 (TSARPAVMPM…KPRKISVDRG (111 aa)) is the sHSP domain.

It belongs to the small heat shock protein (HSP20) family.

Its function is as follows. Not known. This protein is one of the major immune reactive proteins in mycobacteria. This chain is 18 kDa antigen (hsp18), found in Mycobacterium leprae (strain TN).